The following is an 81-amino-acid chain: Cytochrome c6 (81 aa).

4 residues coordinate heme c: Cys10, Cys13, His14, and Met54.

This sequence belongs to the cytochrome c family. PetJ subfamily. As to quaternary structure, monomer. Post-translationally, binds 1 heme c group covalently per subunit.

The protein resides in the cellular thylakoid lumen. Functions as an electron carrier between membrane-bound cytochrome b6-f and photosystem I in oxygenic photosynthesis. The sequence is that of Cytochrome c6 (petJ) from Microcystis aeruginosa.